Consider the following 402-residue polypeptide: Serine/threonine transporter SstT (402 aa).

9 consecutive transmembrane segments (helical) span residues 19–39 (IGVVIGLFLGILVPKASAIGL), 43–63 (LFVGGLKAIAPLLVFTLVISA), 86–106 (TFAAALIAVVVNYIFPLTLIL), 138–158 (AITEANYMSILFWAVIFGLAM), 179–199 (VVKWIINLAPIGIMGLVFTSI), 212–232 (LLILVLVGTMLFVALVVNPII), 287–307 (IPLGAAINMAGAAITINILTL), 327–347 (VVAAVSACGASGVTGGSLLLI), and 354–374 (FGISNDVAMQVVGVGFIVGVI).

Belongs to the dicarboxylate/amino acid:cation symporter (DAACS) (TC 2.A.23) family.

Its subcellular location is the cell membrane. The enzyme catalyses L-serine(in) + Na(+)(in) = L-serine(out) + Na(+)(out). The catalysed reaction is L-threonine(in) + Na(+)(in) = L-threonine(out) + Na(+)(out). In terms of biological role, involved in the import of serine and threonine into the cell, with the concomitant import of sodium (symport system). The polypeptide is Serine/threonine transporter SstT (Streptococcus agalactiae serotype Ia (strain ATCC 27591 / A909 / CDC SS700)).